The chain runs to 523 residues: MQSVQGTDAMTAPAASLPGSKKVFIKWALLGTVGLINGYATILMYSRGEVAFAMLTVILTALALYVFGSKKTYAHRYIYPGIAGMILFILFPLAYTVGLAFTNYSAKNQLSLDRAQSVLLDRTFQSGESYPFTLYKTDSGHRIVIKDGDVLLSTPEFVLGSAISDLDLSPVDTVSGTAEPIKTIVSNRTALSSIDLHFANGDDIRMSGLRKFAGVVPLYTMQADGETLKNNQTGELLKPNMDVGFYQAMDEAGNFVGNTVSPGFVVQIGTDNFERVWKDDGIKEPFISIFIWTVVFSILTVLLTLMIGLVLASVVQWEELKGRAIYRVLLILPYAVPAFISILIFKGLFNQSFGEINMVLNALFGISPSWFSDPIMAKSMVLIVNTWLGFPYMMILCMGLLKAIPEDLYEASAIDGANFVQNFTRVTLPLMIKPLTPLLIASFAFNFNNFVMIQLLTQGGPNMIGTSEPAGYTDLLVSYTYRIAFEGGGGQDFGLASAIATLIFLLVGALALLNLRFTKLSQN.

Topologically, residues 1–22 (MQSVQGTDAMTAPAASLPGSKK) are cytoplasmic. A helical membrane pass occupies residues 23 to 45 (VFIKWALLGTVGLINGYATILMY). Residues 46-49 (SRGE) lie on the Periplasmic side of the membrane. A helical membrane pass occupies residues 50–69 (VAFAMLTVILTALALYVFGS). Topologically, residues 70 to 81 (KKTYAHRYIYPG) are cytoplasmic. Residues 82–104 (IAGMILFILFPLAYTVGLAFTNY) form a helical membrane-spanning segment. The Periplasmic segment spans residues 105 to 288 (SAKNQLSLDR…DDGIKEPFIS (184 aa)). Residues 289 to 311 (IFIWTVVFSILTVLLTLMIGLVL) form a helical membrane-spanning segment. The ABC transmembrane type-1 domain occupies 290 to 514 (FIWTVVFSIL…LLVGALALLN (225 aa)). Residues 312–322 (ASVVQWEELKG) lie on the Cytoplasmic side of the membrane. A helical membrane pass occupies residues 323 to 345 (RAIYRVLLILPYAVPAFISILIF). Residues 346 to 378 (KGLFNQSFGEINMVLNALFGISPSWFSDPIMAK) are Periplasmic-facing. Residues 379-401 (SMVLIVNTWLGFPYMMILCMGLL) form a helical membrane-spanning segment. At 402–434 (KAIPEDLYEASAIDGANFVQNFTRVTLPLMIKP) the chain is on the cytoplasmic side. A helical membrane pass occupies residues 435–457 (LTPLLIASFAFNFNNFVMIQLLT). At 458–492 (QGGPNMIGTSEPAGYTDLLVSYTYRIAFEGGGGQD) the chain is on the periplasmic side. Residues 493 to 515 (FGLASAIATLIFLLVGALALLNL) form a helical membrane-spanning segment. Residues 516–523 (RFTKLSQN) lie on the Cytoplasmic side of the membrane.

It belongs to the binding-protein-dependent transport system permease family. MalFG subfamily. In terms of assembly, the complex is composed of two ATP-binding proteins (MalK), two transmembrane proteins (MalG and MalF) and a solute-binding protein (MalE).

The protein resides in the cell inner membrane. Its function is as follows. Part of the ABC transporter complex MalEFGK involved in maltose/maltodextrin import. Probably responsible for the translocation of the substrate across the membrane. The polypeptide is Maltose/maltodextrin transport system permease protein MalF (malF) (Vibrio vulnificus (strain CMCP6)).